Consider the following 189-residue polypeptide: Putative nucleotidase BC_3386 (189 aa).

The protein belongs to the 5'(3')-deoxyribonucleotidase family.

The polypeptide is Putative nucleotidase BC_3386 (Bacillus cereus (strain ATCC 14579 / DSM 31 / CCUG 7414 / JCM 2152 / NBRC 15305 / NCIMB 9373 / NCTC 2599 / NRRL B-3711)).